A 499-amino-acid chain; its full sequence is Low-affinity inorganic phosphate transporter PitA (499 aa).

Residues 1–4 (MLHL) lie on the Periplasmic side of the membrane. Residues 5 to 25 (FAGLDLHTGLLLLLALAFVLF) traverse the membrane as a helical segment. The Cytoplasmic segment spans residues 26 to 51 (YEAINGFHDTANAVATVIYTRAMRSQ). Residues 52 to 72 (LAVVMAAVFNFLGVLLGGLSV) form a helical membrane-spanning segment. Topologically, residues 73–93 (AYAIVHMLPTDLLLNMGSSHG) are periplasmic. The chain crosses the membrane as a helical span at residues 94–114 (LAMVFSMLLAAIIWNLGTWYF). Residues 115-123 (GLPASSSHT) are Cytoplasmic-facing. Residues 124-144 (LIGAIIGIGLTNALMTGTSVV) form a helical membrane-spanning segment. Residues 145–154 (DALNIPKVLS) lie on the Periplasmic side of the membrane. A helical transmembrane segment spans residues 155–175 (IFGSLIVSPIVGLVFAGGLIF). The Cytoplasmic portion of the chain corresponds to 176 to 206 (LLRRYWSGTKKRARIHLTPAEREKKDGKKKP). A helical membrane pass occupies residues 207 to 227 (PFWTRIALILSAIGVAFSHGA). Residues 228–232 (NDGQK) are Periplasmic-facing. A helical membrane pass occupies residues 233–253 (GIGLVMLVLIGVAPAGFVVNM). The Cytoplasmic portion of the chain corresponds to 254–381 (NATGYEITRT…KSDMLSTIEY (128 aa)). Residues 382-402 (APVWIIMAVALALGIGTMIGW) form a helical membrane-spanning segment. The Periplasmic segment spans residues 403 to 429 (RRVATTIGEKIGKKGMTYAQGMSAQMT). A helical membrane pass occupies residues 430 to 450 (AAVSIGLASYTGMPVSTTHVL). Residues 451-472 (SSSVAGTMVVDGGGLQRKTVTS) are Cytoplasmic-facing. Residues 473–493 (ILMAWVFTLPAAVLLSGGLYW) form a helical membrane-spanning segment. Residues 494–499 (LSLQFL) are Periplasmic-facing.

This sequence belongs to the inorganic phosphate transporter (PiT) (TC 2.A.20) family. Pit subfamily.

The protein localises to the cell inner membrane. It carries out the reaction phosphate(in) + H(+)(in) = phosphate(out) + H(+)(out). Its function is as follows. Low-affinity inorganic phosphate transporter. This Escherichia coli O157:H7 protein is Low-affinity inorganic phosphate transporter PitA (pitA).